We begin with the raw amino-acid sequence, 1202 residues long: Caffeine-induced protein 16 (1202 aa).

Residues 1105-1159 (NIALLLRGFFCYYGLTTQYSFDWEAYMIDISSSQLKRKSTEFKDCPFVVLDPFLK) form the PAP-associated domain.

This chain is Caffeine-induced protein 16 (cid16), found in Schizosaccharomyces pombe (strain 972 / ATCC 24843) (Fission yeast).